Consider the following 319-residue polypeptide: Cytochrome f (319 aa).

The N-terminal stretch at 1-34 is a signal peptide; it reads MQNRNTYEWAKKMTRLISVLVMIHIITRTSISNA. 4 residues coordinate heme: tyrosine 35, cysteine 55, cysteine 58, and histidine 59. The chain crosses the membrane as a helical span at residues 287–304; that stretch reads GLLLFLASVILAQIFLVL.

The protein belongs to the cytochrome f family. The 4 large subunits of the cytochrome b6-f complex are cytochrome b6, subunit IV (17 kDa polypeptide, petD), cytochrome f and the Rieske protein, while the 4 small subunits are PetG, PetL, PetM and PetN. The complex functions as a dimer. Heme is required as a cofactor.

It localises to the plastid. The protein resides in the chloroplast thylakoid membrane. Component of the cytochrome b6-f complex, which mediates electron transfer between photosystem II (PSII) and photosystem I (PSI), cyclic electron flow around PSI, and state transitions. This chain is Cytochrome f (petA), found in Pinus thunbergii (Japanese black pine).